A 1381-amino-acid chain; its full sequence is DNA-directed RNA polymerase subunit beta'' (1381 aa).

Positions 224, 296, 303, and 306 each coordinate Zn(2+).

This sequence belongs to the RNA polymerase beta' chain family. RpoC2 subfamily. In plastids the minimal PEP RNA polymerase catalytic core is composed of four subunits: alpha, beta, beta', and beta''. When a (nuclear-encoded) sigma factor is associated with the core the holoenzyme is formed, which can initiate transcription. It depends on Zn(2+) as a cofactor.

Its subcellular location is the plastid. The protein localises to the chloroplast. It catalyses the reaction RNA(n) + a ribonucleoside 5'-triphosphate = RNA(n+1) + diphosphate. DNA-dependent RNA polymerase catalyzes the transcription of DNA into RNA using the four ribonucleoside triphosphates as substrates. The chain is DNA-directed RNA polymerase subunit beta'' from Drimys granadensis.